The following is a 284-amino-acid chain: Nitrogenase iron protein 1 (284 aa).

17–24 (GKGGIGKS) lines the ATP pocket. Cys-105 contributes to the [4Fe-4S] cluster binding site. ADP-ribosylarginine; by dinitrogenase reductase ADP-ribosyltransferase is present on Arg-108. Residue Cys-140 participates in [4Fe-4S] cluster binding.

The protein belongs to the NifH/BchL/ChlL family. In terms of assembly, homodimer. [4Fe-4S] cluster is required as a cofactor. Post-translationally, the reversible ADP-ribosylation of Arg-108 inactivates the nitrogenase reductase and regulates nitrogenase activity.

The enzyme catalyses N2 + 8 reduced [2Fe-2S]-[ferredoxin] + 16 ATP + 16 H2O = H2 + 8 oxidized [2Fe-2S]-[ferredoxin] + 2 NH4(+) + 16 ADP + 16 phosphate + 6 H(+). Functionally, the key enzymatic reactions in nitrogen fixation are catalyzed by the nitrogenase complex, which has 2 components: the iron protein and the molybdenum-iron protein. This chain is Nitrogenase iron protein 1 (nifH1), found in Methanothermococcus thermolithotrophicus (Methanococcus thermolithotrophicus).